The sequence spans 736 residues: MPRYKTVEQVLSLMKDRTRVRNIGIIAHVDHGKTTTSDTLLAASGIISPKVAGEALALDYLSVEQQRGITVKAANISLYHEAEGKGYVINLIDTPGHVDFSGRVTRSLRVLDGSIVVVDAVEGIMTQTETVLRQSLEERVRPILFINKVDRLVKELKLSPQEMLNRLLDIIRQVNNLIDMYGEPEFKEKWMINPQAGNVIFGSAKDKWGFSLPMAQKKGINMKNVIDAYTASDKSKLEELAAQAPINEALLDAAIKFVPNPIEAQKYRIPKIWKGDLDNELAKAMLNADPNGPIVFMITDMKVDPHAGLVATGRVFSGTLRSGEELWLVNAKTSQRILQVSLYMGPTRELAEEIPAGNIAAVLGLDRARSGETAISVGFSNVQGSFERLHYISEPVVTIAVEPKNPKDLTKMIDALRKLSIEDPNLVVKINEETGEYLLSGMGFLHLEVSLQLLRENYGIDVVTTPPIVVYRESIRAKSQVFEGKSPNKHNKFYLSVEPLNDKTIELISNGTIREDMDSKEMAKILRDEASWDYDEAKRIIAIDENVNVFVDLTSGVQHLREVMDTVLQGFRLAMKEGPLAHEPIRGVKVILHDAVIHEDPAHRGPAQIYPAVRNSIFAGFLTSRPTLLEPIQKLDIRVPADLIGNVTAVITRKRGKILDVSQIANMSRITAEIPVSESYDMASELRGSTGGRAFWGTEFSRWAPVPDSILLDVVTKIRERKGLPKELPKVEDFLS.

The region spanning 18–234 (TRVRNIGIIA…VIDAYTASDK (217 aa)) is the tr-type G domain. GTP contacts are provided by residues 27–34 (AHVDHGKT), 93–97 (DTPGH), and 147–150 (NKVD). H603 is modified (diphthamide).

Belongs to the TRAFAC class translation factor GTPase superfamily. Classic translation factor GTPase family. EF-G/EF-2 subfamily.

It localises to the cytoplasm. Functionally, catalyzes the GTP-dependent ribosomal translocation step during translation elongation. During this step, the ribosome changes from the pre-translocational (PRE) to the post-translocational (POST) state as the newly formed A-site-bound peptidyl-tRNA and P-site-bound deacylated tRNA move to the P and E sites, respectively. Catalyzes the coordinated movement of the two tRNA molecules, the mRNA and conformational changes in the ribosome. In Saccharolobus islandicus (strain Y.N.15.51 / Yellowstone #2) (Sulfolobus islandicus), this protein is Elongation factor 2.